Reading from the N-terminus, the 409-residue chain is Small ribosomal subunit protein mS47 (409 aa).

The transit peptide at 1-26 directs the protein to the mitochondrion; it reads MQTVKALRRVSEPLQWVRSVSYGRRF. Positions 388–409 are disordered; that stretch reads ASELDDSDSELKLPTAQREPYF.

This sequence belongs to the enoyl-CoA hydratase/isomerase family. Mitochondrion-specific ribosomal protein mS47 subfamily. Component of the mitochondrial ribosome small subunit.

The protein localises to the mitochondrion. This Arabidopsis thaliana (Mouse-ear cress) protein is Small ribosomal subunit protein mS47.